The following is a 1097-amino-acid chain: Protein STICHEL-like 3 (1097 aa).

Disordered stretches follow at residues 1–22, 74–168, 220–293, 321–358, and 400–436; these read MTTT…NNRI, SLRD…YRIG, NVRP…GFGE, GRSL…DSSS, and DSDL…LTEK. Positions 10–20 are enriched in polar residues; sequence RVASSSSTRNN. A compositionally biased stretch (basic and acidic residues) spans 95–113; sequence LPKKGDLVEGGRRSVDLKK. The span at 126-136 shows a compositional bias: polar residues; that stretch reads PVVNFGTSKVT. The segment covering 137–168 has biased composition (basic and acidic residues); it reads PSDERSGPVSGERDSGRRVKREESSRKSYRIG. Over residues 227 to 241 the composition is skewed to gly residues; it reads YGGGGGGGNTRGCAG. Positions 245 to 259 are enriched in basic residues; sequence RPKRRKFRGTRRVRG. Basic and acidic residues-rich tracts occupy residues 281–291 and 332–345; these read VEKHDGEKEGF and KGGR…RNGS. Low complexity predominate over residues 346–358; it reads DKMMIQSDDDSSS. Basic residues predominate over residues 411–429; sequence EKKHKKKSHVNARHRHRQQ. 472–479 provides a ligand contact to ATP; the sequence is GPNGTGKT. The Zn(2+) site is built by cysteine 491, cysteine 500, cysteine 503, and cysteine 506. Residues 742–770 are a coiled coil; sequence KEDMEKLRQALKTLSEAEKQLRVSNDKLT. Disordered regions lie at residues 790–828, 913–932, and 956–1003; these read SSTA…DSRK, DPRN…DKSL, and VTES…SQSI. Basic and acidic residues-rich tracts occupy residues 796–807 and 818–828; these read GGRESSDHHLDP and GLDRRRGDSRK. Over residues 993 to 1003 the composition is skewed to polar residues; that stretch reads ASQSQNQSQSI.

It belongs to the DnaX/STICHEL family.

The chain is Protein STICHEL-like 3 from Arabidopsis thaliana (Mouse-ear cress).